Here is a 420-residue protein sequence, read N- to C-terminus: Vasopressin V1a receptor (420 aa).

Residues 1–45 (MSFPRGSYDPAASNSSPRWPLSAEDANSSREAAGHQKGSDPSGDV) are disordered. Residues 1–54 (MSFPRGSYDPAASNSSPRWPLSAEDANSSREAAGHQKGSDPSGDVRNEELAKLE) lie on the Extracellular side of the membrane. A glycan (N-linked (GlcNAc...) asparagine) is linked at Asn27. Positions 32-45 (AAGHQKGSDPSGDV) are enriched in basic and acidic residues. Residues 55 to 75 (IAVLAVIFVVAVLGNSSVLLA) form a helical membrane-spanning segment. Residues 76 to 92 (LHRTPRKTSRMHLFIRH) are Cytoplasmic-facing. Residues 93–113 (LSLADLAVAFFQVLPQLCWDI) traverse the membrane as a helical segment. Topologically, residues 114–125 (TYRFRGPDWLCR) are extracellular. Cys124 and Cys205 are oxidised to a cystine. A helical transmembrane segment spans residues 126–146 (VVKHLQVFAMFASAYMLVVMT). Topologically, residues 147-168 (ADRYIAVCHPLKTLQQPARRSR) are cytoplasmic. The chain crosses the membrane as a helical span at residues 169–189 (LMIAASWVLSFLLSTPQYFIF). Residues 190 to 225 (SMIEIEVNNGTKTQDCWATFIQPWGTRAYVTWMTSG) are Extracellular-facing. An N-linked (GlcNAc...) asparagine glycan is attached at Asn198. A helical membrane pass occupies residues 226–246 (VFVVPVVILGTCYGFICYHIW). At 247-294 (RNVRGKTASRQSKGSGEDVAPFHKGLLVTPCVSSVKTISRAKIRTVKM) the chain is on the cytoplasmic side. The helical transmembrane segment at 295-315 (TFVIVTAYILCWAPFFIVQMW) threads the bilayer. Over 316–331 (SVWDDNFIWTDSENPS) the chain is Extracellular. Residues 332–352 (ITITALLASLNSCCNPWIYMF) traverse the membrane as a helical segment. Over 353-420 (FSGHLLQDCV…RSIRFIPVST (68 aa)) the chain is Cytoplasmic. S-palmitoyl cysteine attachment occurs at residues Cys367 and Cys368. The disordered stretch occupies residues 379–411 (DSDNMSRRQTSYSNNRSPTNSTGTWKDSPKSSR). Residues 385–403 (RRQTSYSNNRSPTNSTGTW) are compositionally biased toward polar residues. Position 406 is a phosphoserine (Ser406).

This sequence belongs to the G-protein coupled receptor 1 family. Vasopressin/oxytocin receptor subfamily.

It localises to the cell membrane. Its function is as follows. Receptor for arginine vasopressin. The activity of this receptor is mediated by G proteins which activate a phosphatidyl-inositol-calcium second messenger system. Involved in social memory formation. The polypeptide is Vasopressin V1a receptor (Avpr1a) (Microtus montanus (Montane vole)).